The following is a 290-amino-acid chain: ATP synthase gamma chain (290 aa).

It belongs to the ATPase gamma chain family. F-type ATPases have 2 components, CF(1) - the catalytic core - and CF(0) - the membrane proton channel. CF(1) has five subunits: alpha(3), beta(3), gamma(1), delta(1), epsilon(1). CF(0) has three main subunits: a, b and c.

It localises to the cell inner membrane. In terms of biological role, produces ATP from ADP in the presence of a proton gradient across the membrane. The gamma chain is believed to be important in regulating ATPase activity and the flow of protons through the CF(0) complex. The sequence is that of ATP synthase gamma chain from Erythrobacter litoralis (strain HTCC2594).